We begin with the raw amino-acid sequence, 35 residues long: Photosystem II reaction center protein T (35 aa).

Residues 3-23 form a helical membrane-spanning segment; the sequence is ALVYTFLLVSTLGIIFFAIFF.

The protein belongs to the PsbT family. In terms of assembly, PSII is composed of 1 copy each of membrane proteins PsbA, PsbB, PsbC, PsbD, PsbE, PsbF, PsbH, PsbI, PsbJ, PsbK, PsbL, PsbM, PsbT, PsbY, PsbZ, Psb30/Ycf12, at least 3 peripheral proteins of the oxygen-evolving complex and a large number of cofactors. It forms dimeric complexes.

The protein resides in the plastid. The protein localises to the chloroplast thylakoid membrane. Its function is as follows. Found at the monomer-monomer interface of the photosystem II (PS II) dimer, plays a role in assembly and dimerization of PSII. PSII is a light-driven water plastoquinone oxidoreductase, using light energy to abstract electrons from H(2)O, generating a proton gradient subsequently used for ATP formation. The chain is Photosystem II reaction center protein T from Gunnera chilensis (Chilean rhubarb).